A 223-amino-acid polypeptide reads, in one-letter code: Ribosome maturation factor RimM (223 aa).

The segment covering 1–12 (MARRPGSSSRGP) has biased composition (low complexity). 2 disordered regions span residues 1–44 (MARR…DPGL) and 203–223 (VADP…DDPG). The PRC barrel domain maps to 135–210 (DEDEFFLTDL…KVVADPPDDL (76 aa)).

This sequence belongs to the RimM family. In terms of assembly, binds ribosomal protein uS19.

The protein localises to the cytoplasm. An accessory protein needed during the final step in the assembly of 30S ribosomal subunit, possibly for assembly of the head region. Essential for efficient processing of 16S rRNA. May be needed both before and after RbfA during the maturation of 16S rRNA. It has affinity for free ribosomal 30S subunits but not for 70S ribosomes. This is Ribosome maturation factor RimM from Methylorubrum extorquens (strain CM4 / NCIMB 13688) (Methylobacterium extorquens).